A 362-amino-acid chain; its full sequence is Putative transport protein BB_0006 (362 aa).

8 helical membrane-spanning segments follow: residues 20-40, 43-63, 68-88, 144-164, 212-232, 234-254, 265-285, and 304-326; these read FYCIVIVLIFIGAFKIAEAVF, LAISIVLGFLVYPVYTFLARF, FLIVFIIFFLLFSFSYLIFSF, EIIGFTSSLVVVFLLLYFLLS, ILVFIGLTLFGQDFPLVWAVL, FVFNFIPSIGSILAVFFIVIT, IVLYVFIYNTSIQMLIGNILE, and LFFWGWLWGIVGLLISYPFTVIV.

The protein belongs to the autoinducer-2 exporter (AI-2E) (TC 2.A.86) family.

The protein resides in the cell membrane. The chain is Putative transport protein BB_0006 from Borreliella burgdorferi (strain ATCC 35210 / DSM 4680 / CIP 102532 / B31) (Borrelia burgdorferi).